A 510-amino-acid chain; its full sequence is Serine carboxypeptidase-like 48 (510 aa).

The signal sequence occupies residues 1 to 25; sequence MDSKTTFLTFLLCIFIFSHFSPSTS. Disulfide bonds link cysteine 141-cysteine 383, cysteine 309-cysteine 326, and cysteine 349-cysteine 354. N-linked (GlcNAc...) asparagine glycans are attached at residues asparagine 158 and asparagine 159. Serine 231 is an active-site residue. Catalysis depends on residues aspartate 421 and histidine 478.

Belongs to the peptidase S10 family. As to expression, ubiquitous.

Its subcellular location is the secreted. Its function is as follows. Probable carboxypeptidase. The chain is Serine carboxypeptidase-like 48 (SCPL48) from Arabidopsis thaliana (Mouse-ear cress).